The sequence spans 456 residues: Bifunctional protein GlmU (456 aa).

A pyrophosphorylase region spans residues 1 to 229 (MLNSAMSVVI…ISETDGVNNR (229 aa)). UDP-N-acetyl-alpha-D-glucosamine-binding positions include 11–14 (LAAG), Lys-25, Gln-76, 81–82 (GT), 103–105 (YGD), Gly-140, Glu-154, Asn-169, and Asn-227. Asp-105 lines the Mg(2+) pocket. Asn-227 is a Mg(2+) binding site. Residues 230-250 (LQLSRLERIYQAEQAEKLLLS) form a linker region. The interval 251 to 456 (GVMLRDPARF…QGWQRPVKKK (206 aa)) is N-acetyltransferase. UDP-N-acetyl-alpha-D-glucosamine-binding residues include Arg-333 and Lys-351. Residue His-363 is the Proton acceptor of the active site. UDP-N-acetyl-alpha-D-glucosamine contacts are provided by Tyr-366 and Asn-377. Residues Ala-380, 386 to 387 (NY), Ser-405, Ala-423, and Arg-440 each bind acetyl-CoA.

The protein in the N-terminal section; belongs to the N-acetylglucosamine-1-phosphate uridyltransferase family. It in the C-terminal section; belongs to the transferase hexapeptide repeat family. Homotrimer. Mg(2+) is required as a cofactor.

The protein localises to the cytoplasm. It catalyses the reaction alpha-D-glucosamine 1-phosphate + acetyl-CoA = N-acetyl-alpha-D-glucosamine 1-phosphate + CoA + H(+). The enzyme catalyses N-acetyl-alpha-D-glucosamine 1-phosphate + UTP + H(+) = UDP-N-acetyl-alpha-D-glucosamine + diphosphate. It functions in the pathway nucleotide-sugar biosynthesis; UDP-N-acetyl-alpha-D-glucosamine biosynthesis; N-acetyl-alpha-D-glucosamine 1-phosphate from alpha-D-glucosamine 6-phosphate (route II): step 2/2. Its pathway is nucleotide-sugar biosynthesis; UDP-N-acetyl-alpha-D-glucosamine biosynthesis; UDP-N-acetyl-alpha-D-glucosamine from N-acetyl-alpha-D-glucosamine 1-phosphate: step 1/1. The protein operates within bacterial outer membrane biogenesis; LPS lipid A biosynthesis. Functionally, catalyzes the last two sequential reactions in the de novo biosynthetic pathway for UDP-N-acetylglucosamine (UDP-GlcNAc). The C-terminal domain catalyzes the transfer of acetyl group from acetyl coenzyme A to glucosamine-1-phosphate (GlcN-1-P) to produce N-acetylglucosamine-1-phosphate (GlcNAc-1-P), which is converted into UDP-GlcNAc by the transfer of uridine 5-monophosphate (from uridine 5-triphosphate), a reaction catalyzed by the N-terminal domain. This chain is Bifunctional protein GlmU, found in Salmonella choleraesuis (strain SC-B67).